A 72-amino-acid polypeptide reads, in one-letter code: Translation initiation factor IF-1 (72 aa).

The S1-like domain maps to 1–72; that stretch reads MAKKDVIELE…TRGRITWRKK (72 aa).

Belongs to the IF-1 family. As to quaternary structure, component of the 30S ribosomal translation pre-initiation complex which assembles on the 30S ribosome in the order IF-2 and IF-3, IF-1 and N-formylmethionyl-tRNA(fMet); mRNA recruitment can occur at any time during PIC assembly.

The protein localises to the cytoplasm. Its function is as follows. One of the essential components for the initiation of protein synthesis. Stabilizes the binding of IF-2 and IF-3 on the 30S subunit to which N-formylmethionyl-tRNA(fMet) subsequently binds. Helps modulate mRNA selection, yielding the 30S pre-initiation complex (PIC). Upon addition of the 50S ribosomal subunit IF-1, IF-2 and IF-3 are released leaving the mature 70S translation initiation complex. This chain is Translation initiation factor IF-1, found in Clostridioides difficile (strain 630) (Peptoclostridium difficile).